We begin with the raw amino-acid sequence, 100 residues long: NADH-quinone oxidoreductase subunit K (100 aa).

Helical transmembrane passes span 4-24 (TSYYVLLSAILFTIGVLGVLL), 29-49 (IVVFMAVELMLNAANLALVAF), and 60-80 (VIVFFVITVAAAEVAVGLALL).

This sequence belongs to the complex I subunit 4L family. NDH-1 is composed of 14 different subunits. Subunits NuoA, H, J, K, L, M, N constitute the membrane sector of the complex.

The protein localises to the cell membrane. It carries out the reaction a quinone + NADH + 5 H(+)(in) = a quinol + NAD(+) + 4 H(+)(out). Functionally, NDH-1 shuttles electrons from NADH, via FMN and iron-sulfur (Fe-S) centers, to quinones in the respiratory chain. The immediate electron acceptor for the enzyme in this species is believed to be ubiquinone. Couples the redox reaction to proton translocation (for every two electrons transferred, four hydrogen ions are translocated across the cytoplasmic membrane), and thus conserves the redox energy in a proton gradient. The polypeptide is NADH-quinone oxidoreductase subunit K (Chloroflexus aurantiacus (strain ATCC 29366 / DSM 635 / J-10-fl)).